Consider the following 133-residue polypeptide: Probable nuclear transport factor 2 (133 aa).

In terms of domain architecture, NTF2 spans 10-128 (VAKAFIQHYY…YFIGNEIFRL (119 aa)).

It localises to the cytoplasm. Its function is as follows. Facilitates protein transport into the nucleus. Could be part of a multicomponent system of cytosolic factors that assemble at the pore complex during nuclear import. The protein is Probable nuclear transport factor 2 (ran-4) of Caenorhabditis elegans.